Reading from the N-terminus, the 629-residue chain is tRNA uridine 5-carboxymethylaminomethyl modification enzyme MnmG (629 aa).

Residues 13–18 (GGGHAG), V125, and S180 contribute to the FAD site. 273 to 287 (GPRYCPSIEDKVMRF) contributes to the NAD(+) binding site. Q370 serves as a coordination point for FAD.

It belongs to the MnmG family. In terms of assembly, homodimer. Heterotetramer of two MnmE and two MnmG subunits. Requires FAD as cofactor.

Its subcellular location is the cytoplasm. Its function is as follows. NAD-binding protein involved in the addition of a carboxymethylaminomethyl (cmnm) group at the wobble position (U34) of certain tRNAs, forming tRNA-cmnm(5)s(2)U34. The sequence is that of tRNA uridine 5-carboxymethylaminomethyl modification enzyme MnmG from Salmonella schwarzengrund (strain CVM19633).